Consider the following 1218-residue polypeptide: Mgp-operon protein 3 (1218 aa).

A signal peptide spans 1–25 (MKSKLKLKRYLLFLPLLPLGTLSLA). Disordered stretches follow at residues 109–129 (QESQ…SGSN), 213–245 (HFGS…GFKL), 262–353 (EPLD…AVVS), and 411–440 (QDAT…PALT). A compositionally biased stretch (low complexity) spans 116-129 (NGSQSGSSDTSGSN). Positions 217 to 231 (GQESSWNSQRSQKGL) are enriched in polar residues. Residues 265 to 286 (DSTKEGKGKDESSWKNSEKTTA) are compositionally biased toward basic and acidic residues. Positions 301–342 (AGSASSLQGNGSNSSGLKSLLRSAPVSVPPSSTSNQTLSLSN) are enriched in low complexity. The span at 411 to 428 (QDATSTNLPHAAGASQTG) shows a compositional bias: polar residues. A helical membrane pass occupies residues 1121-1141 (VGSSVGILLILLILGLGIGIP). Over residues 1192 to 1204 (NNAAPKAPVKPAA) the composition is skewed to low complexity. Residues 1192-1218 (NNAAPKAPVKPAAPTAPRPPVQPPKKA) form a disordered region. Over residues 1205–1218 (PTAPRPPVQPPKKA) the composition is skewed to pro residues.

The protein localises to the cell membrane. The chain is Mgp-operon protein 3 from Mycoplasma pneumoniae (strain ATCC 29342 / M129 / Subtype 1) (Mycoplasmoides pneumoniae).